The following is a 206-amino-acid chain: Large ribosomal subunit protein mL40 (206 aa).

The transit peptide at 1–46 (MATGVMLCAARALRPRSWIPGTCQAHVRHTHQRASLLAFWDLIPMR) directs the protein to the mitochondrion. Residues 170–189 (PFEKEGPHYTPPISNYQAPE) are disordered.

The protein belongs to the mitochondrion-specific ribosomal protein mL40 family. In terms of assembly, component of the mitochondrial ribosome large subunit (39S) which comprises a 16S rRNA and about 50 distinct proteins. As to expression, ubiquitous.

The protein resides in the mitochondrion. This is Large ribosomal subunit protein mL40 (Mrpl40) from Mus musculus (Mouse).